The following is an 880-amino-acid chain: Endoglucanase E-4 (880 aa).

The first 46 residues, 1–46 (MSVTEPPPRRRGRHSRARRFLTSLGATAALTAGMLGVPLATGTAHA), serve as a signal peptide directing secretion. The Nucleophile role is filled by Asp104. Residues His422, His427, Asp461, and Glu470 contribute to the active site. The CBM3 domain occupies 504 to 652 (PDGPEIFVEA…GVPVWGTAPE (149 aa)). Residues 647–688 (WGTAPEEGEEPGGGEGPGGGEEPGEDVTPPSAPGSPAVRDVT) are disordered. Positions 678 to 770 (APGSPAVRDV…TVSFTTLAEN (93 aa)) constitute a Fibronectin type-III domain. The region spanning 771–880 (GGGPDASCTV…TLNGEPCALA (110 aa)) is the CBM2 domain.

This sequence belongs to the glycosyl hydrolase 9 (cellulase E) family.

It carries out the reaction Endohydrolysis of (1-&gt;4)-beta-D-glucosidic linkages in cellulose, lichenin and cereal beta-D-glucans.. It functions in the pathway glycan metabolism; cellulose degradation. The polypeptide is Endoglucanase E-4 (celD) (Thermobifida fusca (Thermomonospora fusca)).